Consider the following 160-residue polypeptide: V-type proton ATPase subunit c (160 aa).

Over 1–6 the chain is Lumenal; the sequence is MSDLCP. Residues 7-27 form a helical membrane-spanning segment; sequence VYAPFFGSIGCAAAIVFTCFG. At 28-53 the chain is on the cytoplasmic side; sequence ASYGTAKSGVGICATSVTRPDLLVKN. The chain crosses the membrane as a helical span at residues 54-74; that stretch reads VVPVVMAGIIAIYGLVVSVLV. At 75–90 the chain is on the lumenal side; it reads SDSLSQKQALYTGFIQ. A helical transmembrane segment spans residues 91–111; that stretch reads LGAGLSVGLSGLAAGFAIGIV. Over 112 to 129 the chain is Cytoplasmic; it reads GDAGVRGTAQQPRLFVGM. The helical transmembrane segment at 130–150 threads the bilayer; sequence ILILIFAEVLGLYGLIVALLL. Residues 151–160 are Lumenal-facing; that stretch reads NSRASQDVTC.

This sequence belongs to the V-ATPase proteolipid subunit family. In terms of assembly, V-ATPase is a heteromultimeric enzyme composed of a peripheral catalytic V1 complex (components A to H) attached to an integral membrane V0 proton pore complex (components: a, c, c', c'', d, e, f and VOA1). The decameric c-ring forms the proton-conducting pore, and is composed of eight proteolipid subunits c, one subunit c' and one subunit c''.

The protein resides in the vacuole membrane. In terms of biological role, proton-conducting pore forming subunit of the V0 complex of vacuolar(H+)-ATPase (V-ATPase), a multisubunit enzyme composed of a peripheral complex (V1) that hydrolyzes ATP and a membrane integral complex (V0) that translocates protons. V-ATPase is responsible for acidifying and maintaining the pH of intracellular compartments. The polypeptide is V-type proton ATPase subunit c (VMA3) (Candida tropicalis (Yeast)).